Consider the following 486-residue polypeptide: Ty transcription activator TEC1 (486 aa).

The residue at position 2 (S2) is an N-acetylserine. Positions 125 to 199 (WTIGCDKWSE…QVWKKTIQNK (75 aa)) form a DNA-binding region, TEA. S325 is subject to Phosphoserine. 2 disordered regions span residues 372 to 410 (EHESNPEFSSNSNSGSEYESEEEVVPRSATVTQLQSRPV) and 465 to 486 (HYEHSPHQRNFTPSNQSHGNFY). Positions 377 to 388 (PEFSSNSNSGSE) are enriched in low complexity. Over residues 472-486 (QRNFTPSNQSHGNFY) the composition is skewed to polar residues.

This sequence belongs to the TEC1 family.

It is found in the nucleus. TEC1 is involved in the activation of TY1 and TY1-mediated gene expression. It is not involved in mating or sporulation processes. The chain is Ty transcription activator TEC1 (TEC1) from Saccharomyces cerevisiae (strain ATCC 204508 / S288c) (Baker's yeast).